Here is a 98-residue protein sequence, read N- to C-terminus: Molybdopterin synthase sulfur carrier subunit (98 aa).

Gly98 carries the post-translational modification 1-thioglycine; alternate. Residue Gly98 is modified to Glycyl adenylate; alternate.

The protein belongs to the MoaD family. MOCS2A subfamily. Heterotetramer; composed of 2 small (MOCS2A) and 2 large (MOCS2B) subunits. In terms of processing, C-terminal thiocarboxylation occurs in 2 steps, it is first acyl-adenylated (-COAMP) via the hesA/moeB/thiF part of MOCS3, then thiocarboxylated (-COSH) via the rhodanese domain of MOCS3.

It localises to the cytoplasm. It functions in the pathway cofactor biosynthesis; molybdopterin biosynthesis. Functionally, acts as a sulfur carrier required for molybdopterin biosynthesis. Component of the molybdopterin synthase complex that catalyzes the conversion of precursor Z into molybdopterin by mediating the incorporation of 2 sulfur atoms into precursor Z to generate a dithiolene group. In the complex, serves as sulfur donor by being thiocarboxylated (-COSH) at its C-terminus by MOCS3. After interaction with MOCS2B, the sulfur is then transferred to precursor Z to form molybdopterin. The sequence is that of Molybdopterin synthase sulfur carrier subunit from Aedes aegypti (Yellowfever mosquito).